Consider the following 484-residue polypeptide: tRNA-2-methylthio-N(6)-dimethylallyladenosine synthase (484 aa).

In terms of domain architecture, MTTase N-terminal spans 36–153; sequence GKLYIKTHGC…LPELIRARRE (118 aa). The [4Fe-4S] cluster site is built by Cys-45, Cys-82, Cys-116, Cys-190, Cys-194, and Cys-197. In terms of domain architecture, Radical SAM core spans 176 to 415; that stretch reads RAEGPSAFVS…HISAHAASIS (240 aa). The TRAM domain occupies 416–479; that stretch reads QSMVGSVQRV…SNSLRGRIQL (64 aa). The interval 428 to 450 is disordered; that stretch reads EGPSRRDPNELTGKSENMRPVNF.

This sequence belongs to the methylthiotransferase family. MiaB subfamily. Monomer. [4Fe-4S] cluster serves as cofactor.

The protein resides in the cytoplasm. It catalyses the reaction N(6)-dimethylallyladenosine(37) in tRNA + (sulfur carrier)-SH + AH2 + 2 S-adenosyl-L-methionine = 2-methylsulfanyl-N(6)-dimethylallyladenosine(37) in tRNA + (sulfur carrier)-H + 5'-deoxyadenosine + L-methionine + A + S-adenosyl-L-homocysteine + 2 H(+). Its function is as follows. Catalyzes the methylthiolation of N6-(dimethylallyl)adenosine (i(6)A), leading to the formation of 2-methylthio-N6-(dimethylallyl)adenosine (ms(2)i(6)A) at position 37 in tRNAs that read codons beginning with uridine. This is tRNA-2-methylthio-N(6)-dimethylallyladenosine synthase from Xanthomonas oryzae pv. oryzae (strain KACC10331 / KXO85).